An 87-amino-acid chain; its full sequence is Beta-toxin Cn4 (87 aa).

The first 19 residues, 1–19, serve as a signal peptide directing secretion; sequence MNSLLMITACLALVGTVWA. The region spanning 20–85 is the LCN-type CS-alpha/beta domain; that stretch reads KEGYLVNSYT…VWPLKNKTCN (66 aa). 4 disulfides stabilise this stretch: Cys-31-Cys-84, Cys-35-Cys-60, Cys-44-Cys-65, and Cys-48-Cys-67. Position 85 is an asparagine amide (Asn-85).

Belongs to the long (4 C-C) scorpion toxin superfamily. Sodium channel inhibitor family. Beta subfamily. Expressed by the venom gland.

It localises to the secreted. Functionally, beta toxins bind voltage-independently at site-4 of sodium channels (Nav) and shift the voltage of activation toward more negative potentials thereby affecting sodium channel activation and promoting spontaneous and repetitive firing. This toxin affects the activation mechanism of sodium channels of squid axon. It also competes with Cn2 in rat brain synaptosomes. Is lethal to mice. This is Beta-toxin Cn4 from Centruroides noxius (Mexican scorpion).